Consider the following 99-residue polypeptide: Large ribosomal subunit protein bL28 (99 aa).

Residues 1 to 25 are disordered; that stretch reads MSRKCAVTGKGVQTGNNVSHANNKS. Positions 11 to 22 are enriched in polar residues; that stretch reads GVQTGNNVSHAN.

It belongs to the bacterial ribosomal protein bL28 family.

The chain is Large ribosomal subunit protein bL28 from Rhodospirillum centenum (strain ATCC 51521 / SW).